The primary structure comprises 608 residues: Threonine--tRNA ligase (608 aa).

Positions 1 to 143 (MRVLYIHAER…SFKPEEGRAD (143 aa)) are editing domain. Catalytic regions lie at residues 194 to 490 (PKYL…PRLP) and 195 to 490 (KYLE…PRLP). The Zn(2+) site is built by cysteine 287, histidine 338, and histidine 459.

This sequence belongs to the class-II aminoacyl-tRNA synthetase family. In terms of assembly, homodimer. The cofactor is Zn(2+).

The protein localises to the cytoplasm. It carries out the reaction tRNA(Thr) + L-threonine + ATP = L-threonyl-tRNA(Thr) + AMP + diphosphate + H(+). In terms of biological role, catalyzes the attachment of threonine to tRNA(Thr) in a two-step reaction: L-threonine is first activated by ATP to form Thr-AMP and then transferred to the acceptor end of tRNA(Thr). Also edits incorrectly charged L-seryl-tRNA(Thr). The polypeptide is Threonine--tRNA ligase (Pyrobaculum aerophilum (strain ATCC 51768 / DSM 7523 / JCM 9630 / CIP 104966 / NBRC 100827 / IM2)).